The chain runs to 366 residues: Neutral protease 2 homolog MGYG_04094 (366 aa).

A signal peptide spans 1 to 19 (MQILAALSAIGALVATATA). Positions 20 to 188 (AAVPNAPAKQ…NKSRSTIDKR (169 aa)) are excised as a propeptide. 2 disulfides stabilise this stretch: cysteine 196/cysteine 267 and cysteine 274/cysteine 292. Histidine 317 contributes to the Zn(2+) binding site. Residue glutamate 318 is part of the active site. Positions 321 and 332 each coordinate Zn(2+).

This sequence belongs to the peptidase M35 family. It depends on Zn(2+) as a cofactor.

It is found in the secreted. The enzyme catalyses Preferential cleavage of bonds with hydrophobic residues in P1'. Also 3-Asn-|-Gln-4 and 8-Gly-|-Ser-9 bonds in insulin B chain.. Secreted metalloproteinase that allows assimilation of proteinaceous substrates. Shows high activities on basic nuclear substrates such as histone and protamine. May be involved in virulence. This is Neutral protease 2 homolog MGYG_04094 from Arthroderma gypseum (strain ATCC MYA-4604 / CBS 118893) (Microsporum gypseum).